Consider the following 276-residue polypeptide: MAHYAIGDIQGCFDELTALLGKIGFNHGTDTLWLTGDIVNRGPKSLETLQFCIRHENSVQIVLGNHDLYLLAVGCGEGALKRSDTIEPILKHPDGGKMLDWLRAQPLLIREGGRVMIHAGILPQWRIAKAESLAGEAEAELRGKKYVKFFSKMYGNKPAAWDEGLEGYARLRFIVNAFTRMRALTFKNELDFDYKSTVKKMPPYLRPWFKAPDRQNLDHTIIFGHWSSLGYTNADNVISLDTGALWGGQLTAVNLETEEITQVQAAGGIDWKSFAK.

The protein belongs to the Ap4A hydrolase family.

The enzyme catalyses P(1),P(4)-bis(5'-adenosyl) tetraphosphate + H2O = 2 ADP + 2 H(+). Functionally, hydrolyzes diadenosine 5',5'''-P1,P4-tetraphosphate to yield ADP. This chain is Bis(5'-nucleosyl)-tetraphosphatase, symmetrical, found in Neisseria gonorrhoeae (strain ATCC 700825 / FA 1090).